A 283-amino-acid chain; its full sequence is Glutamate racemase (283 aa).

Residues 13-14 (DS) and 45-46 (YG) contribute to the substrate site. The Proton donor/acceptor role is filled by C76. 77–78 (NT) provides a ligand contact to substrate. The active-site Proton donor/acceptor is C186. Residue 187 to 188 (TH) participates in substrate binding.

It belongs to the aspartate/glutamate racemases family.

It carries out the reaction L-glutamate = D-glutamate. It functions in the pathway cell wall biogenesis; peptidoglycan biosynthesis. Its function is as follows. Provides the (R)-glutamate required for cell wall biosynthesis. This chain is Glutamate racemase, found in Microcystis aeruginosa (strain NIES-843 / IAM M-2473).